Here is a 147-residue protein sequence, read N- to C-terminus: Protein archease (147 aa).

Ca(2+) is bound by residues Asp-17, Asp-146, and Ile-147.

This sequence belongs to the archease family.

In terms of biological role, activates the tRNA-splicing ligase complex by facilitating the enzymatic turnover of catalytic subunit RtcB. Acts by promoting the guanylylation of RtcB, a key intermediate step in tRNA ligation. Can also alter the NTP specificity of RtcB such that ATP, dGTP or ITP is used efficiently. In Pyrobaculum calidifontis (strain DSM 21063 / JCM 11548 / VA1), this protein is Protein archease.